A 177-amino-acid polypeptide reads, in one-letter code: Ribosome maturation factor RimM (177 aa).

Residues 100-177 (EDEYYWSDLV…TVLVAWPSDY (78 aa)) form the PRC barrel domain.

It belongs to the RimM family. Binds ribosomal protein uS19.

The protein resides in the cytoplasm. Functionally, an accessory protein needed during the final step in the assembly of 30S ribosomal subunit, possibly for assembly of the head region. Essential for efficient processing of 16S rRNA. May be needed both before and after RbfA during the maturation of 16S rRNA. It has affinity for free ribosomal 30S subunits but not for 70S ribosomes. The chain is Ribosome maturation factor RimM from Psychrobacter cryohalolentis (strain ATCC BAA-1226 / DSM 17306 / VKM B-2378 / K5).